Reading from the N-terminus, the 360-residue chain is Catabolic L-serine/threonine dehydratase (360 aa).

S2 carries the N-acetylserine modification. An N6-(pyridoxal phosphate)lysine modification is found at K37.

This sequence belongs to the serine/threonine dehydratase family. It depends on pyridoxal 5'-phosphate as a cofactor.

The protein localises to the mitochondrion. It catalyses the reaction L-serine = pyruvate + NH4(+). The catalysed reaction is L-threonine = 2-oxobutanoate + NH4(+). This is Catabolic L-serine/threonine dehydratase (CHA1) from Saccharomyces cerevisiae (strain ATCC 204508 / S288c) (Baker's yeast).